Reading from the N-terminus, the 333-residue chain is Gramillins biosynthetic cluster protein FGSG_00039 (333 aa).

It participates in mycotoxin biosynthesis. Its function is as follows. Part of the gene cluster that mediates the biosynthesis of gramillins A and B, bicyclic lipopeptides that induce cell death in maize leaves but not in wheat leaves. The nonribosomal peptide synthetase GRA1 incorporates respectively a glutamic adic (Glu), a leucine (Leu), a serine (Ser), a hydroxyglutamine (HOGln), a 2-amino decanoic acid, and 2 cysteins (CysB and CysA). The biosynthesis of 2-amino decanoic acid incorporated in gramillins could be initiated by a fatty acid synthase composed of the alpha and beta subunits FGSG_00036 and FGSG_11656. The cytochrome P450 monooxygenase FGSG_15680 could hydroxylate the fatty acid chain. Subsequent oxidation to the ketone by the oxidoreductase FGSG_00048 and transamination by aminotransferase FGSG_00049 could form 2-amino-decanoic acid. On the other hand, FGSG_15680 could also be responsible for the HO-modified glutamine at the gamma-position. Whether hydroxylation occurs on the fully assembled product or on the Gln residue prior to assembly into the gramillins requires further proof. The thioredoxin FGSG_00043 could also be required for the disulfide-bond formation between CysA and CysB. The specific involvement of the remaining proteins from the cluster is more difficult to discern, but could have broader regulatory (FGSG_00040 and FGSG_11657) or enzymatic functions (FGSG_00044 and FGSG_00045). The final C-domain of GRA1 does not possess the expected sequence of a termination CT domain, often implicated in macrocyclization and release of a cyclopeptidein fungal NRPs; and the thioesterase FGSG_00047 may act in concert with the terminal C-domain of GRA1 to catalyze the formation of the macrocyclic anhydride and release of the products. This is Gramillins biosynthetic cluster protein FGSG_00039 from Gibberella zeae (strain ATCC MYA-4620 / CBS 123657 / FGSC 9075 / NRRL 31084 / PH-1) (Wheat head blight fungus).